The sequence spans 851 residues: Venom phosphodiesterase 1 (851 aa).

An N-terminal signal peptide occupies residues 1–23 (MIQQKVLFISLVAVTLGLGLGLG). SMB domains lie at 30 to 73 (PQVS…VLPT) and 74 to 118 (QSWS…GETS). 16 cysteine pairs are disulfide-bonded: Cys-34-Cys-38, Cys-34-Cys-51, Cys-38-Cys-69, Cys-49-Cys-51, Cys-49-Cys-62, Cys-55-Cys-61, Cys-62-Cys-69, Cys-78-Cys-83, Cys-78-Cys-95, Cys-83-Cys-113, Cys-93-Cys-95, Cys-93-Cys-106, Cys-99-Cys-105, Cys-106-Cys-113, Cys-124-Cys-170, and Cys-132-Cys-344. An N-linked (GlcNAc...) asparagine glycan is attached at Asn-39. The Cell attachment site signature appears at 58 to 60 (RQA). A divalent metal cation contacts are provided by Asp-147 and Thr-185. Thr-185 functions as the AMP-threonine intermediate in the catalytic mechanism. N-linked (GlcNAc...) asparagine glycosylation is found at Asn-216, Asn-259, and Asn-270. Lys-271 is an AMP binding site. 4 residues coordinate a divalent metal cation: Asp-305, His-309, Asp-352, and His-353. Residue His-309 participates in AMP binding. Intrachain disulfides connect Cys-360–Cys-457, Cys-408–Cys-793, Cys-541–Cys-599, Cys-554–Cys-654, Cys-556–Cys-639, and Cys-762–Cys-772. A glycan (N-linked (GlcNAc...) asparagine) is linked at Asn-405. His-462 is a binding site for a divalent metal cation. 4 N-linked (GlcNAc...) asparagine glycosylation sites follow: Asn-512, Asn-594, Asn-674, and Asn-745.

This sequence belongs to the nucleotide pyrophosphatase/phosphodiesterase family. Monomer cleaved in two subunits; disulfide-linked. Is synthesized as a single-chain protein and is subsequently cleaved to form a two-subunit protein held together with disulfide bonds. A divalent metal cation serves as cofactor. In terms of tissue distribution, expressed by venom gland.

The protein resides in the secreted. It catalyses the reaction ADP + H2O = AMP + phosphate + H(+). In terms of biological role, hydrolyzes ADP with high activity. Shows weak or no activity on 5'-AMP, 5'-GMP, 3'-AMP, ATP, cAMP, and cGMP. Is devoid of monophosphatase and proteinase activities. Dose-dependently inhibits platelet aggregation induced by ADP and collagen. The protein is Venom phosphodiesterase 1 of Crotalus adamanteus (Eastern diamondback rattlesnake).